Reading from the N-terminus, the 168-residue chain is Oocyte-secreted protein 2 (168 aa).

The first 21 residues, M1 to A21, serve as a signal peptide directing secretion.

Belongs to the PLAC1 family. Expressed in ovaries. Highly expressed in the germinal vesicles oocytes and metaphase II oocytes.

Its subcellular location is the secreted. The protein resides in the cytoplasm. The protein is Oocyte-secreted protein 2 (Oosp2) of Mus musculus (Mouse).